A 216-amino-acid chain; its full sequence is Adenylate kinase (216 aa).

10 to 15 (GAGKGT) contributes to the ATP binding site. The NMP stretch occupies residues 30 to 59 (STGDMFRAAMKAETELGLQAKSFIDKGALV). Residues Thr31, Arg36, 57 to 59 (ALV), 85 to 88 (GFPR), and Gln92 contribute to the AMP site. The interval 126 to 163 (GRRICKECGATYHLEFNPPAKADVCDKCGGELYQRSDD) is LID. ATP is bound at residue Arg127. Zn(2+)-binding residues include Cys130 and Cys133. 136-137 (TY) is a binding site for ATP. The Zn(2+) site is built by Cys150 and Cys153. Residues Arg160 and Arg171 each coordinate AMP. Gln199 contacts ATP.

It belongs to the adenylate kinase family. Monomer.

It localises to the cytoplasm. It catalyses the reaction AMP + ATP = 2 ADP. Its pathway is purine metabolism; AMP biosynthesis via salvage pathway; AMP from ADP: step 1/1. Functionally, catalyzes the reversible transfer of the terminal phosphate group between ATP and AMP. Plays an important role in cellular energy homeostasis and in adenine nucleotide metabolism. This is Adenylate kinase from Bacillus mycoides (strain KBAB4) (Bacillus weihenstephanensis).